The chain runs to 632 residues: Acyl-coenzyme A oxidase-like protein (632 aa).

376-381 contributes to the FAD binding site; sequence TGGMGY.

Belongs to the acyl-CoA oxidase family. It depends on FAD as a cofactor.

The protein is Acyl-coenzyme A oxidase-like protein (Acoxl) of Mus musculus (Mouse).